Reading from the N-terminus, the 348-residue chain is D-erythrose-4-phosphate dehydrogenase (348 aa).

NAD(+) is bound by residues 12–13 (RI) and Arg-81. Substrate is bound by residues 154–156 (SCT), Arg-200, 213–214 (TK), and Arg-236. The active-site Nucleophile is Cys-155. Residue Asn-318 coordinates NAD(+).

It belongs to the glyceraldehyde-3-phosphate dehydrogenase family. Epd subfamily. Homotetramer.

It localises to the cytoplasm. The catalysed reaction is D-erythrose 4-phosphate + NAD(+) + H2O = 4-phospho-D-erythronate + NADH + 2 H(+). The protein operates within cofactor biosynthesis; pyridoxine 5'-phosphate biosynthesis; pyridoxine 5'-phosphate from D-erythrose 4-phosphate: step 1/5. Catalyzes the NAD-dependent conversion of D-erythrose 4-phosphate to 4-phosphoerythronate. In Salmonella agona (strain SL483), this protein is D-erythrose-4-phosphate dehydrogenase.